The sequence spans 242 residues: Ubiquitin-conjugating enzyme E2 6 (242 aa).

Residues 1–220 (MASRQSQKRL…HSTPSFGVQR (220 aa)) are Cytoplasmic-facing. Residues 5–156 (QSQKRLTKEY…NQRFTKQFPD (152 aa)) form the UBC core domain. The active-site Glycyl thioester intermediate is the Cys87. A disordered region spans residues 170-190 (AREQAAATTDSTDPEKPFDVR). The helical transmembrane segment at 221-240 (FTLVGVVVAAFIAAYFNFFS) threads the bilayer.

This sequence belongs to the ubiquitin-conjugating enzyme family.

The protein localises to the endoplasmic reticulum membrane. The catalysed reaction is S-ubiquitinyl-[E1 ubiquitin-activating enzyme]-L-cysteine + [E2 ubiquitin-conjugating enzyme]-L-cysteine = [E1 ubiquitin-activating enzyme]-L-cysteine + S-ubiquitinyl-[E2 ubiquitin-conjugating enzyme]-L-cysteine.. The protein operates within protein modification; protein ubiquitination. In terms of biological role, catalyzes the covalent attachment of ubiquitin to other proteins. Functions in degradation of misfolded or regulated proteins localized in the endoplasmic reticulum (ER) lumen or membrane via the ubiquitin-proteasome system. Cognate E2 conjugating enzyme for the DOA10 ubiquitin ligase complex, which is part of the ERAD-C pathway responsible for the rapid degradation of membrane proteins with misfolded cytoplasmic domains. The protein is Ubiquitin-conjugating enzyme E2 6 (UBC6) of Debaryomyces hansenii (strain ATCC 36239 / CBS 767 / BCRC 21394 / JCM 1990 / NBRC 0083 / IGC 2968) (Yeast).